Reading from the N-terminus, the 271-residue chain is Glutamate racemase (271 aa).

Substrate contacts are provided by residues Asp9 to Ser10 and Tyr41 to Gly42. Cys72 serves as the catalytic Proton donor/acceptor. Residue Asn73–Thr74 coordinates substrate. Cys183 serves as the catalytic Proton donor/acceptor. Thr184–His185 lines the substrate pocket.

This sequence belongs to the aspartate/glutamate racemases family.

It catalyses the reaction L-glutamate = D-glutamate. The protein operates within cell wall biogenesis; peptidoglycan biosynthesis. Provides the (R)-glutamate required for cell wall biosynthesis. The sequence is that of Glutamate racemase from Exiguobacterium sibiricum (strain DSM 17290 / CCUG 55495 / CIP 109462 / JCM 13490 / 255-15).